Reading from the N-terminus, the 212-residue chain is MTETEQTTAPIYPLKRNWTWWYLNDERNKSWEDRLKKVYTFNTVSEFWALYDAIRPPSGLNALCDYNVFRDDIQPMWEVPENSNGGRWLIVIDKGKTPEMVDAIWLEILMALVGEQFGKDMESICGLVCNVRGKGSKISVWTKDCNDDETNMRIGVVLKEKLMAASKDHSKPLFDVIRYEDHESCQKKTSSVVKAKLSLHSSDAPVAEKSAV.

A disulfide bridge connects residues Cys125 and Cys129.

The protein belongs to the eukaryotic initiation factor 4E family. EIF4F is a multi-subunit complex, the composition of which varies with external and internal environmental conditions. It is composed of at least EIF4A, EIF4E and EIF4G. EIF4E is also known to interact with other partners, including pgl-1. Interacts with ifet-1. Enriched in the germline from L3 larvae to adults; regions of the gonad undergoing spermatogenesis. Expressed in germ granules (P granules); when associated with pgl-1.

It localises to the cytoplasm. In terms of biological role, recognizes and binds the 7-methylguanosine-containing mRNA cap during an early step in the initiation of protein synthesis and facilitates ribosome binding by inducing the unwinding of the mRNAs secondary structures. All 5 eIF4E proteins bind monomethyl cap structures. Only ife-1, ife-2 and ife-5 bind trimethyl cap structures which result from trans-splicing. Translation of trimethyl cap structure mRNAs may be regulated by intracellular redox state; disulfide bonds change the width and depth of the cap-binding cavity determining selectivity to mRNA caps. Required for progression through meiotic divisions during spermatogenesis and for the production of viable sperm. It is not required during oogenesis. The sequence is that of Eukaryotic translation initiation factor 4E-1 (ife-1) from Caenorhabditis elegans.